The primary structure comprises 212 residues: Large ribosomal subunit protein uL3 (212 aa).

Residues 135 to 155 are compositionally biased toward polar residues; that stretch reads ATHGNSVSHRAHGSTGQNQSP. The tract at residues 135–162 is disordered; the sequence is ATHGNSVSHRAHGSTGQNQSPGKVFKGK. Q153 is modified (N5-methylglutamine).

This sequence belongs to the universal ribosomal protein uL3 family. As to quaternary structure, part of the 50S ribosomal subunit. Forms a cluster with proteins L14 and L19. In terms of processing, methylated by PrmB.

Functionally, one of the primary rRNA binding proteins, it binds directly near the 3'-end of the 23S rRNA, where it nucleates assembly of the 50S subunit. This Psychrobacter arcticus (strain DSM 17307 / VKM B-2377 / 273-4) protein is Large ribosomal subunit protein uL3.